A 160-amino-acid chain; its full sequence is Probable nucleoside diphosphate kinase DDB_G0292928 (160 aa).

K12, F61, R103, T109, R122, and N132 together coordinate ATP. H135 acts as the Pros-phosphohistidine intermediate in catalysis.

This sequence belongs to the NDK family. It depends on Mg(2+) as a cofactor.

The catalysed reaction is a 2'-deoxyribonucleoside 5'-diphosphate + ATP = a 2'-deoxyribonucleoside 5'-triphosphate + ADP. The enzyme catalyses a ribonucleoside 5'-diphosphate + ATP = a ribonucleoside 5'-triphosphate + ADP. This Dictyostelium discoideum (Social amoeba) protein is Probable nucleoside diphosphate kinase DDB_G0292928.